We begin with the raw amino-acid sequence, 141 residues long: Endoribonuclease YbeY (141 aa).

3 residues coordinate Zn(2+): His107, His111, and Asp117.

Belongs to the endoribonuclease YbeY family. Zn(2+) is required as a cofactor.

It is found in the cytoplasm. Its function is as follows. Single strand-specific metallo-endoribonuclease involved in late-stage 70S ribosome quality control and in maturation of the 3' terminus of the 16S rRNA. This Endomicrobium trichonymphae protein is Endoribonuclease YbeY.